We begin with the raw amino-acid sequence, 191 residues long: Adenine phosphoribosyltransferase 5 (191 aa).

It belongs to the purine/pyrimidine phosphoribosyltransferase family. As to quaternary structure, homodimer.

The protein resides in the cytoplasm. The catalysed reaction is AMP + diphosphate = 5-phospho-alpha-D-ribose 1-diphosphate + adenine. It participates in purine metabolism; AMP biosynthesis via salvage pathway; AMP from adenine: step 1/1. Its function is as follows. Catalyzes a salvage reaction resulting in the formation of AMP, that is energically less costly than de novo synthesis. May contribute to the recycling of adenine into adenylate nucleotides and the inactivation of cytokinins by phosphoribosylation. Possesses low activity toward adenine, but can efficiently convert cytokinins from free bases (active form) to the corresponding nucleotides (inactive form). In Arabidopsis thaliana (Mouse-ear cress), this protein is Adenine phosphoribosyltransferase 5 (APT5).